The primary structure comprises 662 residues: Methyl-accepting chemotaxis protein TlpB (662 aa).

Residues 1 to 16 are Cytoplasmic-facing; the sequence is MGKFIQWIKQPSISKP. Residues 17-37 form a helical membrane-spanning segment; sequence LIAAFLAVLILPVGVLAYFSY. Topologically, residues 38 to 281 are extracellular; the sequence is QSAWNALDRE…LQDASSPVLN (244 aa). Positions 153 to 228 constitute a Cache domain; it reads SEPYTDEATG…KPGTTGSGDW (76 aa). Residues 282–302 traverse the membrane as a helical segment; it reads TAVIILCVSIVIGGILILYII. The HAMP domain occupies 303-355; the sequence is RAITKPLRKLVSTSAKISSGDLTEVIDIHSKNEFGQLGESFNEMSASLRSVIG. Over 303-662 the chain is Cytoplasmic; the sequence is RAITKPLRKL…DITKKFKIES (360 aa). Glu-370 bears the Glutamate methyl ester (Glu) mark. Residues 374–610 enclose the Methyl-accepting transducer domain; the sequence is SAAQTSKATE…EVSSAVEDIS (237 aa). Gln-594 is modified (glutamate methyl ester (Gln)). A glutamate methyl ester (Glu) mark is found at Glu-629 and Glu-636.

This sequence belongs to the methyl-accepting chemotaxis (MCP) protein family.

It is found in the cell membrane. Functionally, chemotactic-signal transducers respond to changes in the concentration of attractants and repellents in the environment, transduce a signal from the outside to the inside of the cell, and facilitate sensory adaptation through the variation of the level of methylation. All amino acids serve as attractants in B.subtilis, they appear to cause an increase in the turnover methyl groups, leading to methylation of an unidentified acceptor, while repellents have been shown to cause a decrease in methyl group turnover. The methyl groups are added by a methyltransferase and removed by a methylesterase. The protein is Methyl-accepting chemotaxis protein TlpB (tlpB) of Bacillus subtilis (strain 168).